Consider the following 443-residue polypeptide: Adenylyltransferase and sulfurtransferase UBA4 (443 aa).

ATP contacts are provided by residues Gly83, Asp104, 111 to 115, Lys128, and 172 to 173; these read SNLHR and DT. The Zn(2+) site is built by Cys214 and Cys217. Cys231 acts as the Glycyl thioester intermediate; for adenylyltransferase activity in catalysis. Residues Cys292 and Cys295 each contribute to the Zn(2+) site. The region spanning 343–441 is the Rhodanese domain; sequence QSKAPVLLDV…WSDIVNPKFP (99 aa). Catalysis depends on Cys400, which acts as the Cysteine persulfide intermediate; for sulfurtransferase activity.

In the N-terminal section; belongs to the HesA/MoeB/ThiF family. UBA4 subfamily. The cofactor is Zn(2+).

Its subcellular location is the cytoplasm. It is found in the cytosol. It participates in tRNA modification; 5-methoxycarbonylmethyl-2-thiouridine-tRNA biosynthesis. In terms of biological role, plays a central role in 2-thiolation of mcm(5)S(2)U at tRNA wobble positions of cytosolic tRNA(Lys), tRNA(Glu) and tRNA(Gln). Acts by mediating the C-terminal thiocarboxylation of sulfur carrier URM1. Its N-terminus first activates URM1 as acyl-adenylate (-COAMP), then the persulfide sulfur on the catalytic cysteine is transferred to URM1 to form thiocarboxylation (-COSH) of its C-terminus. The reaction probably involves hydrogen sulfide that is generated from the persulfide intermediate and that acts as a nucleophile towards URM1. Subsequently, a transient disulfide bond is formed. Does not use thiosulfate as sulfur donor; NFS1 probably acting as a sulfur donor for thiocarboxylation reactions. Prior mcm(5) tRNA modification by the elongator complex is required for 2-thiolation. May also be involved in protein urmylation. In Scheffersomyces stipitis (strain ATCC 58785 / CBS 6054 / NBRC 10063 / NRRL Y-11545) (Yeast), this protein is Adenylyltransferase and sulfurtransferase UBA4.